The primary structure comprises 223 residues: Spore wall protein 26 (223 aa).

The signal sequence occupies residues 1–16 (MNIIIFSLMTISFLRA). An HBM motif is present at residues 207–214 (SKKKLDKS).

It is found in the spore core. The protein localises to the spore wall. Its subcellular location is the spore. The protein resides in the perispore. Functionally, spore wall protein involved in the adhesion to host cells surface. Microsporidian spore adherence is an integral part of activation and host cell invasion which requires the extrusion at the spore apex of a very long and coiled structure, the polar tube, through which the sporoplasm is pushed to enter into the potential host cell. The protein is Spore wall protein 26 (SWP26) of Nosema bombycis (strain CQ1 / CVCC 102059) (Microsporidian parasite).